We begin with the raw amino-acid sequence, 482 residues long: Glycogen synthase (482 aa).

An ADP-alpha-D-glucose-binding site is contributed by Lys15.

The protein belongs to the glycosyltransferase 1 family. Bacterial/plant glycogen synthase subfamily.

The catalysed reaction is [(1-&gt;4)-alpha-D-glucosyl](n) + ADP-alpha-D-glucose = [(1-&gt;4)-alpha-D-glucosyl](n+1) + ADP + H(+). The protein operates within glycan biosynthesis; glycogen biosynthesis. In terms of biological role, synthesizes alpha-1,4-glucan chains using ADP-glucose. In Hydrogenobaculum sp. (strain Y04AAS1), this protein is Glycogen synthase.